Reading from the N-terminus, the 113-residue chain is uncharacterized protein (113 aa).

It is found in the mitochondrion. This is an uncharacterized protein from Arabidopsis thaliana (Mouse-ear cress).